The following is a 145-amino-acid chain: uncharacterized protein (145 aa).

The tract at residues 1-59 (MSTGTPHYAADRSKSRKSNNNRSIPFRTPTTQKVVKTSIRLGPVNPPTPTRNTQGGHGF) is disordered.

This is an uncharacterized protein from Caenorhabditis elegans.